A 505-amino-acid chain; its full sequence is Megakaryocyte-associated tyrosine-protein kinase (505 aa).

An SH3 domain is found at 46 to 108 (APGTQCMTKC…AAAALRHGEA (63 aa)). An SH2 domain is found at 120-209 (WFHGKISGQE…AICTKLVKPR (90 aa)). The 249-residue stretch at 233-481 (LTLGAQIGEG…IVEKLGRELR (249 aa)) folds into the Protein kinase domain. ATP contacts are provided by residues 239–247 (IGEGEFGAV) and K260. Residue D350 is the Proton acceptor of the active site. The tract at residues 483–505 (VGVSAPAGGQEAEGSAPTRSQDP) is disordered.

This sequence belongs to the protein kinase superfamily. Tyr protein kinase family. CSK subfamily. As to quaternary structure, interacts with KIT. In terms of tissue distribution, most abundant in brain, and to a lesser extent in the spleen, the thymus and the liver. Also found in the T-cell lineage.

The protein resides in the cytoplasm. It localises to the membrane. It catalyses the reaction L-tyrosyl-[protein] + ATP = O-phospho-L-tyrosyl-[protein] + ADP + H(+). Functionally, could play a significant role in the signal transduction of hematopoietic cells. May regulate tyrosine kinase activity of SRC-family members in brain by specifically phosphorylating their C-terminal regulatory tyrosine residue which acts as a negative regulatory site. It may play an inhibitory role in the control of T-cell proliferation. This chain is Megakaryocyte-associated tyrosine-protein kinase (Matk), found in Mus musculus (Mouse).